The primary structure comprises 895 residues: DNA double-strand break repair Rad50 ATPase (895 aa).

Residues 32 to 38 (NGAGKSS) and glutamine 137 each bind ATP. Positions 183 to 253 (SDYDYLKNEL…LNAQLETIKK (71 aa)) form a coiled coil. One can recognise a Zinc-hook domain in the interval 411–507 (RAEINSSLMQ…ERKHQKKLLD (97 aa)). Zn(2+) is bound by residues cysteine 455 and cysteine 458. 2 coiled-coil regions span residues 464-510 (TEKS…DRIN) and 618-647 (ENSL…AMDE).

This sequence belongs to the SMC family. RAD50 subfamily. As to quaternary structure, homodimer. Forms a heterotetramer composed of two Mre11 subunits and two Rad50 subunits. Requires Zn(2+) as cofactor.

Its function is as follows. Part of the Rad50/Mre11 complex, which is involved in the early steps of DNA double-strand break (DSB) repair. The complex may facilitate opening of the processed DNA ends to aid in the recruitment of HerA and NurA. Rad50 controls the balance between DNA end bridging and DNA resection via ATP-dependent structural rearrangements of the Rad50/Mre11 complex. The sequence is that of DNA double-strand break repair Rad50 ATPase from Thermoplasma volcanium (strain ATCC 51530 / DSM 4299 / JCM 9571 / NBRC 15438 / GSS1).